A 464-amino-acid chain; its full sequence is Gamma-aminobutyric acid receptor subunit rho-3 (464 aa).

The first 15 residues, 1-15 (MVLAFWLAFFTYTWI), serve as a signal peptide directing secretion. Topologically, residues 16–263 (TLMLDASAVK…LFINFVLRRH (248 aa)) are extracellular. A 4-aminobutanoate-binding site is contributed by R108. N-linked (GlcNAc...) asparagine glycosylation occurs at N123. Residue S172 participates in 4-aminobutanoate binding. C181 and C195 are joined by a disulfide. An N-linked (GlcNAc...) asparagine glycan is attached at N194. E200 provides a ligand contact to 4-aminobutanoate. Residues 264–284 (IFFFVLQTYFPAMLMVMLSWV) traverse the membrane as a helical segment. Residues 285–296 (SFWIDRRAVPAR) are Cytoplasmic-facing. A helical membrane pass occupies residues 297 to 317 (VSLGITTVLTMSTIVTGVSAS). The Extracellular segment spans residues 318-328 (MPQVSYVKAVD). A helical transmembrane segment spans residues 329 to 349 (VYMWVSSLFVFLSVIEYAAVN). The interval 344–445 (EYAAVNYLTT…NNHVIDTYSR (102 aa)) is interaction with SQSTM1. Over 350-443 (YLTTVEEWKQ…LENNHVIDTY (94 aa)) the chain is Cytoplasmic. A helical membrane pass occupies residues 444 to 464 (SRIVFPVVYIIFNLFYWGIYV).

Belongs to the ligand-gated ion channel (TC 1.A.9) family. Gamma-aminobutyric acid receptor (TC 1.A.9.5) subfamily. GABRR3 sub-subfamily. In terms of assembly, three rho subunits (rho-1/GBRR1, rho-2/GBRR2 and rho-3/GBRR3) coassemble either to form functional homopentamers or heteropentamers. Forms a ternary complex with SQSTM1 and PRKCZ. As to expression, expressed in retina.

It is found in the postsynaptic cell membrane. Its subcellular location is the cell membrane. The enzyme catalyses chloride(in) = chloride(out). Activated by agonists in the following the potency order: muscimol &gt; TACP &gt; TACA &gt; thiomuscimol &gt; CAMP &gt; CACA, when forming a homopentamer. Inhibited by TPMPA, a rho-specific antagonist, when forming a homopentamer. Inhibited antagonists in the following the potency order: TAMP = TPMPA &gt; P4MPA = THIP &gt; 14AA &gt; 3-APA, when forming a homopentamer. Functionally, rho subunit of the pentameric ligand-gated chloride channels responsible for mediating the effects of gamma-aminobutyric acid (GABA), the major inhibitory neurotransmitter in the brain. Rho-containing GABA-gated chloride channels are a subclass of GABA(A) receptors (GABAARs) entirely composed of rho subunits, where GABA molecules bind at the rho intersubunit interfaces. When activated by GABA, rho-GABAARs selectively allow the flow of chloride anions across the cell membrane down their electrochemical gradient. In Rattus norvegicus (Rat), this protein is Gamma-aminobutyric acid receptor subunit rho-3.